A 153-amino-acid chain; its full sequence is MAAGLFGLSARRLLAAAATRGLPAARVRWESSFSRTVVAPSAVARKRLPEPTTQWQEDLDPEDENLYEKNPDSHGYDKDPVLDVWNMRLVFFFGVSIILVLGSTFVAYLPDYRMKEWSRREAERLVKYREANGLPIMESNCFDPSKIQLPEDE.

Residues 1–29 constitute a mitochondrion transit peptide; that stretch reads MAAGLFGLSARRLLAAAATRGLPAARVRW. The segment at 49–72 is disordered; it reads PEPTTQWQEDLDPEDENLYEKNPD. A helical transmembrane segment spans residues 89–109; the sequence is LVFFFGVSIILVLGSTFVAYL.

It belongs to the complex I NDUFB11 subunit family. As to quaternary structure, complex I is composed of 45 different subunits. Interacts with BCAP31.

It localises to the mitochondrion inner membrane. Accessory subunit of the mitochondrial membrane respiratory chain NADH dehydrogenase (Complex I), that is believed not to be involved in catalysis. Complex I functions in the transfer of electrons from NADH to the respiratory chain. The immediate electron acceptor for the enzyme is believed to be ubiquinone. This Pongo pygmaeus (Bornean orangutan) protein is NADH dehydrogenase [ubiquinone] 1 beta subcomplex subunit 11, mitochondrial (NDUFB11).